The chain runs to 304 residues: Methionyl-tRNA formyltransferase (304 aa).

110–113 (SLLP) lines the (6S)-5,6,7,8-tetrahydrofolate pocket.

This sequence belongs to the Fmt family.

It catalyses the reaction L-methionyl-tRNA(fMet) + (6R)-10-formyltetrahydrofolate = N-formyl-L-methionyl-tRNA(fMet) + (6S)-5,6,7,8-tetrahydrofolate + H(+). Functionally, attaches a formyl group to the free amino group of methionyl-tRNA(fMet). The formyl group appears to play a dual role in the initiator identity of N-formylmethionyl-tRNA by promoting its recognition by IF2 and preventing the misappropriation of this tRNA by the elongation apparatus. The sequence is that of Methionyl-tRNA formyltransferase from Sulfurovum sp. (strain NBC37-1).